Reading from the N-terminus, the 485-residue chain is Noelin (485 aa).

A signal peptide spans 1-16 (MSVPLLKIGVVLSTMA). N-linked (GlcNAc...) asparagine glycosylation is found at asparagine 33, asparagine 103, asparagine 187, asparagine 288, asparagine 307, asparagine 394, asparagine 431, and asparagine 473. Residues 87 to 227 (RDARTKQLRQ…LRACMQKLAC (141 aa)) adopt a coiled-coil conformation. Residues 226 to 478 (ACGKLTGISD…QTLYNVTLFH (253 aa)) form the Olfactomedin-like domain. A disulfide bridge connects residues cysteine 227 and cysteine 409. Residues 482 to 485 (SDEL) carry the Endoplasmic reticulum retention signal motif.

In terms of assembly, homotetramer; disulfide-linked. Dimer of dimers, giving rise to a V-shaped homotretramer. Isoform 1 and isoform 3 interact with RTN4R. Identified in a complex with RTN4R and LINGO1. Peripherally associated with AMPAR complex. AMPAR complex consists of an inner core made of 4 pore-forming GluA/GRIA proteins (GRIA1, GRIA2, GRIA3 and GRIA4) and 4 major auxiliary subunits arranged in a twofold symmetry. One of the two pairs of distinct binding sites is occupied either by CNIH2, CNIH3 or CACNG2, CACNG3. The other harbors CACNG2, CACNG3, CACNG4, CACNG8 or GSG1L. This inner core of AMPAR complex is complemented by outer core constituents binding directly to the GluA/GRIA proteins at sites distinct from the interaction sites of the inner core constituents. Outer core constituents include at least PRRT1, PRRT2, CKAMP44/SHISA9, FRRS1L and NRN1. The proteins of the inner and outer core serve as a platform for other, more peripherally associated AMPAR constituents, including OLFM1. Alone or in combination, these auxiliary subunits control the gating and pharmacology of the AMPAR complex and profoundly impact their biogenesis and protein processing. Interacts with OLFM2. Interacts with DTNB. In terms of tissue distribution, expressed in the brain cortex, olfactory bulb and vomeronasal neuroepithelium (at protein level). Detected in brain cortex, hippocampus, dorsal root ganglion and olfactory bulb.

Its subcellular location is the secreted. It localises to the synapse. The protein localises to the endoplasmic reticulum. The protein resides in the cell projection. It is found in the axon. Its subcellular location is the perikaryon. Contributes to the regulation of axonal growth in the embryonic and adult central nervous system by inhibiting interactions between RTN4R and LINGO1. Inhibits RTN4R-mediated axon growth cone collapse. May play an important role in regulating the production of neural crest cells by the neural tube. May be required for normal responses to olfactory stimuli. The sequence is that of Noelin (Olfm1) from Mus musculus (Mouse).